The primary structure comprises 339 residues: Ketol-acid reductoisomerase (NADP(+)) (339 aa).

Residues 1 to 182 (MRVYYDRDAD…GGGRAGIIET (182 aa)) form the KARI N-terminal Rossmann domain. Residues 24-27 (YGSQ), R48, S51, T53, and 83-86 (DELQ) contribute to the NADP(+) site. H108 is an active-site residue. NADP(+) is bound at residue G134. Residues 183–328 (TFREECETDL…AKLRAMMPWI (146 aa)) enclose the KARI C-terminal knotted domain. Residues D191, E195, E227, and E231 each contribute to the Mg(2+) site. S252 is a substrate binding site.

It belongs to the ketol-acid reductoisomerase family. It depends on Mg(2+) as a cofactor.

It catalyses the reaction (2R)-2,3-dihydroxy-3-methylbutanoate + NADP(+) = (2S)-2-acetolactate + NADPH + H(+). The enzyme catalyses (2R,3R)-2,3-dihydroxy-3-methylpentanoate + NADP(+) = (S)-2-ethyl-2-hydroxy-3-oxobutanoate + NADPH + H(+). Its pathway is amino-acid biosynthesis; L-isoleucine biosynthesis; L-isoleucine from 2-oxobutanoate: step 2/4. It participates in amino-acid biosynthesis; L-valine biosynthesis; L-valine from pyruvate: step 2/4. Functionally, involved in the biosynthesis of branched-chain amino acids (BCAA). Catalyzes an alkyl-migration followed by a ketol-acid reduction of (S)-2-acetolactate (S2AL) to yield (R)-2,3-dihydroxy-isovalerate. In the isomerase reaction, S2AL is rearranged via a Mg-dependent methyl migration to produce 3-hydroxy-3-methyl-2-ketobutyrate (HMKB). In the reductase reaction, this 2-ketoacid undergoes a metal-dependent reduction by NADPH to yield (R)-2,3-dihydroxy-isovalerate. The protein is Ketol-acid reductoisomerase (NADP(+)) of Methylocella silvestris (strain DSM 15510 / CIP 108128 / LMG 27833 / NCIMB 13906 / BL2).